Here is a 793-residue protein sequence, read N- to C-terminus: Signal transducer and activator of transcription 5A (793 aa).

Y90 is modified (phosphotyrosine). Position 128 is a phosphoserine (S128). Positions 589 to 686 (WNDGAILGFV…EVFAKYYTPV (98 aa)) constitute an SH2 domain. Y682 bears the Phosphotyrosine mark. A Phosphotyrosine; by JAK2 modification is found at Y694. The tract at residues 772–793 (DSLDPRLSPPAGLFTSARSSLS) is disordered. Residue S779 is modified to Phosphoserine.

It belongs to the transcription factor STAT family. As to quaternary structure, forms a homodimer or a heterodimer with a related family member. Binds NR3C1. Interacts with NCOA1 and SOCS7. Interacts with ERBB4. Interacts with EBF4. In terms of processing, ISGylated. Tyrosine phosphorylated in response to KITLG/SCF, IL2, IL3, IL7, IL15, CSF2/GMCSF, GH1, PRL, EPO and THPO. Activated KIT promotes phosphorylation on tyrosine residues and subsequent translocation to the nucleus. Tyrosine phosphorylated in response to constitutively activated FGFR1, FGFR2, FGFR3 and FGFR4. Tyrosine phosphorylation is required for DNA-binding activity and dimerization. Serine phosphorylation is also required for maximal transcriptional activity. Tyrosine phosphorylated in response to signaling via activated FLT3; wild-type FLT3 results in much weaker phosphorylation than constitutively activated mutant FLT3. Alternatively, can be phosphorylated by JAK2 at Tyr-694. Expressed in heart, lung, and weakly in muscle.

It is found in the cytoplasm. Its subcellular location is the nucleus. Functionally, carries out a dual function: signal transduction and activation of transcription. Mediates cellular responses to the cytokine KITLG/SCF and other growth factors. May mediate cellular responses to activated FGFR1, FGFR2, FGFR3 and FGFR4. Binds to the GAS element and activates PRL-induced transcription. Regulates the expression of milk proteins during lactation. The chain is Signal transducer and activator of transcription 5A (Stat5a) from Rattus norvegicus (Rat).